We begin with the raw amino-acid sequence, 265 residues long: 4-hydroxy-tetrahydrodipicolinate reductase (265 aa).

NAD(+) contacts are provided by residues 7–12 (GASGRM), D33, 96–98 (GTT), and 120–123 (AANF). The active-site Proton donor/acceptor is the H153. H154 contacts (S)-2,3,4,5-tetrahydrodipicolinate. K157 acts as the Proton donor in catalysis. A (S)-2,3,4,5-tetrahydrodipicolinate-binding site is contributed by 163 to 164 (GT).

It belongs to the DapB family.

Its subcellular location is the cytoplasm. The enzyme catalyses (S)-2,3,4,5-tetrahydrodipicolinate + NAD(+) + H2O = (2S,4S)-4-hydroxy-2,3,4,5-tetrahydrodipicolinate + NADH + H(+). It catalyses the reaction (S)-2,3,4,5-tetrahydrodipicolinate + NADP(+) + H2O = (2S,4S)-4-hydroxy-2,3,4,5-tetrahydrodipicolinate + NADPH + H(+). Its pathway is amino-acid biosynthesis; L-lysine biosynthesis via DAP pathway; (S)-tetrahydrodipicolinate from L-aspartate: step 4/4. Functionally, catalyzes the conversion of 4-hydroxy-tetrahydrodipicolinate (HTPA) to tetrahydrodipicolinate. The sequence is that of 4-hydroxy-tetrahydrodipicolinate reductase from Cupriavidus taiwanensis (strain DSM 17343 / BCRC 17206 / CCUG 44338 / CIP 107171 / LMG 19424 / R1) (Ralstonia taiwanensis (strain LMG 19424)).